The chain runs to 338 residues: Large ribosomal subunit protein uL10 (338 aa).

Residues 309–327 show a composition bias toward basic and acidic residues; the sequence is KAEVEEAKEEEKEEKKEEA. A disordered region spans residues 309-338; sequence KAEVEEAKEEEKEEKKEEAAPAAAGLGLLF.

Belongs to the universal ribosomal protein uL10 family. Part of the 50S ribosomal subunit. Forms part of the ribosomal stalk which helps the ribosome interact with GTP-bound translation factors. Forms a heptameric L10(L12)2(L12)2(L12)2 complex, where L10 forms an elongated spine to which the L12 dimers bind in a sequential fashion.

Forms part of the ribosomal stalk, playing a central role in the interaction of the ribosome with GTP-bound translation factors. The protein is Large ribosomal subunit protein uL10 of Methanothermococcus thermolithotrophicus (Methanococcus thermolithotrophicus).